Here is a 274-residue protein sequence, read N- to C-terminus: 3-methyl-2-oxobutanoate hydroxymethyltransferase (274 aa).

Residues Asp49 and Asp88 each coordinate Mg(2+). Residues 49-50, Asp88, and Lys118 each bind 3-methyl-2-oxobutanoate; that span reads DS. Glu120 is a binding site for Mg(2+). The active-site Proton acceptor is the Glu187.

It belongs to the PanB family. In terms of assembly, homodecamer; pentamer of dimers. Requires Mg(2+) as cofactor.

It localises to the cytoplasm. The enzyme catalyses 3-methyl-2-oxobutanoate + (6R)-5,10-methylene-5,6,7,8-tetrahydrofolate + H2O = 2-dehydropantoate + (6S)-5,6,7,8-tetrahydrofolate. It functions in the pathway cofactor biosynthesis; (R)-pantothenate biosynthesis; (R)-pantoate from 3-methyl-2-oxobutanoate: step 1/2. In terms of biological role, catalyzes the reversible reaction in which hydroxymethyl group from 5,10-methylenetetrahydrofolate is transferred onto alpha-ketoisovalerate to form ketopantoate. The sequence is that of 3-methyl-2-oxobutanoate hydroxymethyltransferase from Nitrobacter winogradskyi (strain ATCC 25391 / DSM 10237 / CIP 104748 / NCIMB 11846 / Nb-255).